The chain runs to 549 residues: Probable protein kinase UbiB (549 aa).

Residues 123-501 (DFEDTPLASA…QQKAHKSNYL (379 aa)) enclose the Protein kinase domain. Residues 129–137 (LASASISQV) and lysine 152 each bind ATP. Residue aspartate 287 is the Proton acceptor of the active site. A run of 2 helical transmembrane segments spans residues 498–518 (SNYL…LLNQ) and 520–540 (ATLW…VLGW).

Belongs to the ABC1 family. UbiB subfamily.

Its subcellular location is the cell inner membrane. The protein operates within cofactor biosynthesis; ubiquinone biosynthesis [regulation]. Its function is as follows. Is probably a protein kinase regulator of UbiI activity which is involved in aerobic coenzyme Q (ubiquinone) biosynthesis. The protein is Probable protein kinase UbiB of Shewanella piezotolerans (strain WP3 / JCM 13877).